The chain runs to 37 residues: Protease 2 large chain (37 aa).

Over residues 1-14 (NDGNGRDSDPHDPG) the composition is skewed to basic and acidic residues. A disordered region spans residues 1–37 (NDGNGRDSDPHDPGDWTTAGQCGLWQPARNSQHWTLV). The segment covering 28-37 (ARNSQHWTLV) has biased composition (polar residues).

This sequence belongs to the peptidase S8 family. Heterodimer of a large and a small chain.

Its subcellular location is the secreted. The sequence is that of Protease 2 large chain from Achromobacter lyticus.